The chain runs to 1231 residues: RNA-binding protein 33 (1231 aa).

Residues 1-13 (MAAALGAGGGAGA) are compositionally biased toward gly residues. Disordered regions lie at residues 1–168 (MAAA…EEEQ) and 219–261 (SQVA…FKTE). Position 2 is an N-acetylalanine (Ala2). The span at 20 to 36 (QFDKPGAERSWRRRAAD) shows a compositional bias: basic and acidic residues. The segment covering 37–49 (EDWDSELEDDLLG) has biased composition (acidic residues). Phosphoserine is present on Ser41. Positions 82 to 108 (FSSQGVTISLNTTSGIVTSFELSDNTN) are enriched in polar residues. 2 stretches are compositionally biased toward acidic residues: residues 112-124 (GEQE…GDDE) and 153-168 (LTED…EEEQ). The segment covering 224–240 (ETHEGGMETLELQKDIK) has biased composition (basic and acidic residues). A compositionally biased stretch (acidic residues) spans 241–252 (EESDEEDDDDEE). Phosphoserine occurs at positions 243 and 271. Disordered regions lie at residues 297-436 (FEER…KNIH) and 452-761 (PLLP…NLRE). Residues 305 to 316 (KQGRYGSRRGGR) are compositionally biased toward basic residues. A compositionally biased stretch (basic and acidic residues) spans 327–344 (GDQRRDNSERGRMKEHRP). Residues 360 to 379 (LIPPPQPQPPPPPPPPPPQQ) are compositionally biased toward pro residues. The segment covering 380–398 (QPIRSLFQQQQLQPLLPLQ) has biased composition (low complexity). Residues 469-483 (FPGPPEFPQHTPGPV) are compositionally biased toward pro residues. Arg520 bears the Asymmetric dimethylarginine mark. 4 stretches are compositionally biased toward pro residues: residues 531–540 (SPPPPPPPPT), 604–618 (FIPP…PGQP), 632–647 (LHPP…PQPQ), and 661–682 (PLQP…PPQH). Polar residues-rich tracts occupy residues 713-728 (QTAQ…QCTP) and 736-759 (AASQ…NSNL). A phosphoserine mark is found at Ser792 and Ser816. Disordered regions lie at residues 796–840 (RAVV…ETRL), 876–932 (ERLA…FPGA), and 998–1080 (ETPH…MRQQ). The segment covering 820 to 829 (QPKEEAKPEA) has biased composition (basic and acidic residues). Residues 840–891 (LYRLKIEEQKRLREEILKQKELRRQQQAGARKKELLERLAQQQQQQQQQQHQ) are a coiled coil. A compositionally biased stretch (low complexity) spans 880 to 901 (QQQQQQQQQQHQPQQQQQQPQQ). Residues Ser1002 and Ser1010 each carry the phosphoserine modification. A Glycyl lysine isopeptide (Lys-Gly) (interchain with G-Cter in SUMO2) cross-link involves residue Lys1019. Ser1032 and Ser1051 each carry phosphoserine.

Associates with the NXF1-NXT1 RNA export complex. Interacts with ALKBH5; facilitating ALKBH5 recruitment to m6A-containing transcripts. Interacts with SENP1; promoting ALKBH5 deSUMOylation and subsequent activation.

It localises to the nucleus. It is found in the cytoplasm. Functionally, RNA reader protein, which recognizes and binds specific RNAs, thereby regulating RNA metabolic processes, such as mRNA export, mRNA stability and/or translation. Binds a subset of intronless RNAs containing GC-rich elements, such as NORAD, and promotes their nuclear export by recruiting target RNAs to components of the NXF1-NXT1 RNA export machinery. Specifically recognizes and binds N6-methyladenosine (m6A)-containing mRNAs, promoting their demethylation by ALKBH5. Acts as an molecular adapter, which (1) promotes ALKBH5 recruitment to m6A-containing transcripts and (2) activates ALKBH5 demethylase activity by recruiting SENP1, leading to ALKBH5 deSUMOylation and subsequent activation. The polypeptide is RNA-binding protein 33 (Mus musculus (Mouse)).